The sequence spans 435 residues: Endosome-associated-trafficking regulator 1 (435 aa).

Ser-18 and Ser-147 each carry phosphoserine. Disordered regions lie at residues 136–185 (ASRH…TGWS) and 225–251 (ESLP…PSAD). Over residues 173-182 (LLDEEEDEDT) the composition is skewed to acidic residues. Positions 173 to 198 (LLDEEEDEDTGWSGAYLPSAIEQTHP) are required for interaction with PTPN13. Residues 240–250 (SPASPAGSPSA) are compositionally biased toward low complexity. Phosphoserine occurs at positions 243 and 247. Residues 261–371 (DRHLRTLQIS…FQRENEALRC (111 aa)) are a coiled coil.

It belongs to the ENTR1 family. In terms of assembly, found in a complex with ENTR1, PTPN13 and GIT1. Interacts with PTPN13 (via the FERM domain). Interacts (via N-terminus) with GIT1 (via N- and C-terminus); this interaction is direct. Interacts with NOD2. Interacts (via N-terminus) with IFT88. Interacts with VPS35. Post-translationally, phosphorylated. Expressed in the colon (at protein level).

Its subcellular location is the cytoplasm. It is found in the early endosome. The protein localises to the endosome. It localises to the recycling endosome. The protein resides in the midbody. Its subcellular location is the cytoskeleton. It is found in the microtubule organizing center. The protein localises to the centrosome. It localises to the cilium basal body. Endosome-associated protein that plays a role in membrane receptor sorting, cytokinesis and ciliogenesis. Involved in the endosome-to-plasma membrane trafficking and recycling of SNX27-retromer-dependent cargo proteins, such as GLUT1. Involved in the regulation of cytokinesis; the function may involve PTPN13 and GIT1. Plays a role in the formation of cilia. Involved in cargo protein localization, such as PKD2, at primary cilia. Involved in the presentation of the tumor necrosis factor (TNF) receptor TNFRSF1A on the cell surface, and hence in the modulation of the TNF-induced apoptosis. The chain is Endosome-associated-trafficking regulator 1 from Homo sapiens (Human).